A 421-amino-acid chain; its full sequence is MRLLYLHADRFEYKTVKPALKNPPDPPGEASFGEALVVFTTVEDGDGPQTVMYAASDIASHSSRLKVTTVILYPYAHLSSRLAKPMAAHKRLIELEGALRTKFPGHVHRAPFGWYKSFSIACKGHPLAELSRSFTEAGALQPWPAVEDYKTGLSGEVLARAGLLGGGSLSPASWALEVHRRLAEEVVGPAESVGFGESLSEAYQACISSSVTTLLMGPYPPSIVFGPLEDDPVEAVSRVLGLISPQLEGVKPLLSGGEGALKASSPDGAELPVAFLKEGRVCLGPTLSFFKLAVSMLVEKARKEGLTPYLNPTLTPVQSAVIPVDSESEGYAQRIAEDLAASGVRVSIVRGSGLGRRVREAGRSWASLVIVVGKREEETGTVVVRRRWEPGKQEVLTLDELSSEAKKLASGSRGSLYSTTL.

This sequence belongs to the class-II aminoacyl-tRNA synthetase family. Archaea-specific ThrRS editing domain subfamily. As to quaternary structure, probably interacts with its catalytic subunit.

It localises to the cytoplasm. In terms of biological role, freestanding tRNA editing subunit of threonine--tRNA ligase, the catalytic subunit is probably AC Q9YDW0. Deacylates (edits) mischarged L-seryl-tRNA(Thr) in trans; has no activity on correctly charged L-threonyl-tRNA(Thr). Probably does not aminoacylate tRNA(Thr). Deacylates correctly charged glycyl-tRNA(Gly), but not glycyl-tRNA(Gly)(2'-dA76) (the terminal 2'-OH of tRNA adenine 76 has been dehydroxylated) nor the 2'-fluoro tRNA derivative, strongly suggesting the editing function is catalyzed by the 2'-OH of A76 of tRNA(Thr). This Aeropyrum pernix (strain ATCC 700893 / DSM 11879 / JCM 9820 / NBRC 100138 / K1) protein is Threonine--tRNA ligase editing subunit (thrS2).